The sequence spans 417 residues: Serine hydroxymethyltransferase (417 aa).

(6S)-5,6,7,8-tetrahydrofolate is bound by residues Leu121 and Gly125–Leu127. Lys229 bears the N6-(pyridoxal phosphate)lysine mark. Ser355 to Phe357 provides a ligand contact to (6S)-5,6,7,8-tetrahydrofolate.

It belongs to the SHMT family. As to quaternary structure, homodimer. It depends on pyridoxal 5'-phosphate as a cofactor.

Its subcellular location is the cytoplasm. The enzyme catalyses (6R)-5,10-methylene-5,6,7,8-tetrahydrofolate + glycine + H2O = (6S)-5,6,7,8-tetrahydrofolate + L-serine. Its pathway is one-carbon metabolism; tetrahydrofolate interconversion. The protein operates within amino-acid biosynthesis; glycine biosynthesis; glycine from L-serine: step 1/1. Catalyzes the reversible interconversion of serine and glycine with tetrahydrofolate (THF) serving as the one-carbon carrier. This reaction serves as the major source of one-carbon groups required for the biosynthesis of purines, thymidylate, methionine, and other important biomolecules. Also exhibits THF-independent aldolase activity toward beta-hydroxyamino acids, producing glycine and aldehydes, via a retro-aldol mechanism. The chain is Serine hydroxymethyltransferase from Xanthomonas oryzae pv. oryzae (strain MAFF 311018).